The following is a 251-amino-acid chain: Imidazole glycerol phosphate synthase subunit HisF (251 aa).

Catalysis depends on residues aspartate 11 and aspartate 130.

The protein belongs to the HisA/HisF family. As to quaternary structure, heterodimer of HisH and HisF.

It is found in the cytoplasm. It catalyses the reaction 5-[(5-phospho-1-deoxy-D-ribulos-1-ylimino)methylamino]-1-(5-phospho-beta-D-ribosyl)imidazole-4-carboxamide + L-glutamine = D-erythro-1-(imidazol-4-yl)glycerol 3-phosphate + 5-amino-1-(5-phospho-beta-D-ribosyl)imidazole-4-carboxamide + L-glutamate + H(+). It functions in the pathway amino-acid biosynthesis; L-histidine biosynthesis; L-histidine from 5-phospho-alpha-D-ribose 1-diphosphate: step 5/9. IGPS catalyzes the conversion of PRFAR and glutamine to IGP, AICAR and glutamate. The HisF subunit catalyzes the cyclization activity that produces IGP and AICAR from PRFAR using the ammonia provided by the HisH subunit. The chain is Imidazole glycerol phosphate synthase subunit HisF from Chlorobaculum tepidum (strain ATCC 49652 / DSM 12025 / NBRC 103806 / TLS) (Chlorobium tepidum).